The primary structure comprises 1104 residues: Nitrite reductase [NAD(P)H] (1104 aa).

Residue 44–79 (QKIVVVGLGMVAVAFIEKLVKLDSERRKYDIVVIGE) coordinates FAD. NAD(+) is bound at residue 146 to 176 (YDILVLATGSDAVLPTSTPGHDAKGIFVYRT). The interval 396-419 (KFLPGQRPSAESIGAADPNREEEP) is disordered. Positions 500, 502, 535, and 538 each coordinate [2Fe-2S] cluster. Residues cysteine 720, cysteine 726, cysteine 760, and cysteine 764 each coordinate [4Fe-4S] cluster. Cysteine 764 is a binding site for siroheme. The 109-residue stretch at 932-1040 (WQPVIKADYF…VEEREDGWIY (109 aa)) folds into the Rieske domain. Positions 976, 978, 1001, and 1004 each coordinate [2Fe-2S] cluster. The segment at 1081–1104 (GKRAGAKGIEGSKPTRSPSNTIDW) is disordered. The span at 1094 to 1104 (PTRSPSNTIDW) shows a compositional bias: polar residues.

The protein belongs to the nitrite and sulfite reductase 4Fe-4S domain family. As to quaternary structure, homodimer. Siroheme is required as a cofactor. The cofactor is [4Fe-4S] cluster. It depends on FAD as a cofactor. [2Fe-2S] cluster serves as cofactor.

It catalyses the reaction NH4(+) + 3 NADP(+) + 2 H2O = nitrite + 3 NADPH + 5 H(+). The catalysed reaction is NH4(+) + 3 NAD(+) + 2 H2O = nitrite + 3 NADH + 5 H(+). It functions in the pathway nitrogen metabolism; nitrate reduction (assimilation). The chain is Nitrite reductase [NAD(P)H] (niiA) from Emericella nidulans (strain FGSC A4 / ATCC 38163 / CBS 112.46 / NRRL 194 / M139) (Aspergillus nidulans).